The primary structure comprises 207 residues: dITP/XTP pyrophosphatase (207 aa).

Substrate is bound at residue 7-12 (SNNAKK). The active-site Proton acceptor is D72. D72 provides a ligand contact to Mg(2+). Substrate contacts are provided by residues S73, 155–158 (FGYD), K183, and 188–189 (HR).

The protein belongs to the HAM1 NTPase family. In terms of assembly, homodimer. Mg(2+) is required as a cofactor.

It catalyses the reaction XTP + H2O = XMP + diphosphate + H(+). The catalysed reaction is dITP + H2O = dIMP + diphosphate + H(+). It carries out the reaction ITP + H2O = IMP + diphosphate + H(+). Its function is as follows. Pyrophosphatase that catalyzes the hydrolysis of nucleoside triphosphates to their monophosphate derivatives, with a high preference for the non-canonical purine nucleotides XTP (xanthosine triphosphate), dITP (deoxyinosine triphosphate) and ITP. Seems to function as a house-cleaning enzyme that removes non-canonical purine nucleotides from the nucleotide pool, thus preventing their incorporation into DNA/RNA and avoiding chromosomal lesions. The chain is dITP/XTP pyrophosphatase from Corynebacterium diphtheriae (strain ATCC 700971 / NCTC 13129 / Biotype gravis).